The sequence spans 82 residues: T-complex protein 1 subunit gamma (82 aa).

Gly-15 is a binding site for ADP. ATP is bound at residue Gly-15. Residue Asp-66 participates in Mg(2+) binding. Residues Gly-67, Thr-68, Thr-69, and Ser-70 each contribute to the ADP site. ATP-binding residues include Gly-67, Thr-68, and Thr-69.

Belongs to the TCP-1 chaperonin family. In terms of assembly, component of the chaperonin-containing T-complex (TRiC), a hexadecamer composed of two identical back-to-back stacked rings enclosing a protein folding chamber. Each ring is made up of eight different subunits: TCP1/CCT1, CCT2, CCT3, CCT4, CCT5, CCT6A/CCT6, CCT7, CCT8. Interacts with PACRG. Interacts with DNAAF4. Interacts with DLEC1.

The protein resides in the cytoplasm. It catalyses the reaction ATP + H2O = ADP + phosphate + H(+). In terms of biological role, component of the chaperonin-containing T-complex (TRiC), a molecular chaperone complex that assists the folding of actin, tubulin and other proteins upon ATP hydrolysis. The TRiC complex mediates the folding of WRAP53/TCAB1, thereby regulating telomere maintenance. As part of the TRiC complex may play a role in the assembly of BBSome, a complex involved in ciliogenesis regulating transports vesicles to the cilia. This is T-complex protein 1 subunit gamma (CCT3) from Sus scrofa (Pig).